A 352-amino-acid polypeptide reads, in one-letter code: MGNQKKIIHIDMDCFYAAIEMRDFPEYQNIPLAVGGDGPRSVLCTSNYQARQFGVRSAMPAIKAKQLCPHLKIVHGRMDVYKETSKNIREIFSRYTDLIEPLSLDEAYLDVTDATMCQGSATLIAERIRADIFNELNLTASAGIAPNKFLAKIASDENKPNGQCVITPDKVANFVEQLSLKKIPGIGPKTFEKLNRHGYVTCADVRQSNIRALQNIVGKFANSLYLKSHGVDNRDLEVSRQRKSLAIETTLAHDISTQDECKLVIDSLYQKLLTRLAPHSNREIIRQGVKLKFTDFNQTTVETQSNECQQALFISLLSKAYSRSNKRGVRLVGLTLGFADSPGESQQLSLSL.

A UmuC domain is found at 7–187 (IIHIDMDCFY…LSLKKIPGIG (181 aa)). Residues D11 and D105 each contribute to the Mg(2+) site. Residue E106 is part of the active site.

It belongs to the DNA polymerase type-Y family. Monomer. The cofactor is Mg(2+).

It localises to the cytoplasm. The enzyme catalyses DNA(n) + a 2'-deoxyribonucleoside 5'-triphosphate = DNA(n+1) + diphosphate. Its function is as follows. Poorly processive, error-prone DNA polymerase involved in untargeted mutagenesis. Copies undamaged DNA at stalled replication forks, which arise in vivo from mismatched or misaligned primer ends. These misaligned primers can be extended by PolIV. Exhibits no 3'-5' exonuclease (proofreading) activity. May be involved in translesional synthesis, in conjunction with the beta clamp from PolIII. The sequence is that of DNA polymerase IV from Colwellia psychrerythraea (strain 34H / ATCC BAA-681) (Vibrio psychroerythus).